Reading from the N-terminus, the 166-residue chain is Transcription antitermination protein NusB (166 aa).

Belongs to the NusB family.

Functionally, involved in transcription antitermination. Required for transcription of ribosomal RNA (rRNA) genes. Binds specifically to the boxA antiterminator sequence of the ribosomal RNA (rrn) operons. In Chromohalobacter salexigens (strain ATCC BAA-138 / DSM 3043 / CIP 106854 / NCIMB 13768 / 1H11), this protein is Transcription antitermination protein NusB.